The primary structure comprises 317 residues: MTSTATFREDFHSLRAGGLNWDSLPLRLFGKGNAKFWDPADIDFTRDAEDWQGLTEEERRSVAMLCSQFIAGEEAVTQDLQPFMAAMAAEGRFGDEMYLTQFCFEEAKHTQVFRLWMDAVGLTGDLHSHVAENPGYRAIFYEELPRSLNALHDDPSPANQVRASVTYNHVVEGTLALTGYFAWQKICRSRGILPGMQEVVRRIGDDERRHMAWGTFTCRRHVAADESNWDVVQEQMQHLLPLAVTQIQWRPEDAPEETPFRLDIDELAAYASDRAGRRLGAISAARGVPVEQIDVDASPEQLEDQFGVEDAAALEKA.

3 residues coordinate Mn(2+): Glu-73, Glu-106, and His-109. Residues 76–167 constitute a cross-link (3-(O4'-tyrosyl)-valine (Val-Tyr)); sequence VTQDLQPFMA…ANQVRASVTY (92 aa). Glu-106 lines the Fe cation pocket. Fe cation is bound by residues Glu-172, Glu-207, and His-210.

It belongs to the ribonucleoside diphosphate reductase small chain family. R2-like ligand binding oxidase subfamily. In terms of assembly, homodimer. Fe cation serves as cofactor. The cofactor is Mn(2+).

Probable oxidase. This chain is R2-like ligand binding oxidase, found in Saccharopolyspora erythraea (strain ATCC 11635 / DSM 40517 / JCM 4748 / NBRC 13426 / NCIMB 8594 / NRRL 2338).